The primary structure comprises 331 residues: ADP-L-glycero-D-manno-heptose-6-epimerase (331 aa).

NADP(+) is bound by residues F11–I12, D32–N33, K39, K54, E75–S79, and N92. The active-site Proton acceptor is the Y139. Position 143 (K143) interacts with NADP(+). N168 contacts substrate. The NADP(+) site is built by V169 and K177. K177 functions as the Proton acceptor in the catalytic mechanism. Substrate contacts are provided by residues R179, H186, F200 to Y203, R213, and Y292.

It belongs to the NAD(P)-dependent epimerase/dehydratase family. HldD subfamily. In terms of assembly, homopentamer. The cofactor is NADP(+).

It catalyses the reaction ADP-D-glycero-beta-D-manno-heptose = ADP-L-glycero-beta-D-manno-heptose. It functions in the pathway nucleotide-sugar biosynthesis; ADP-L-glycero-beta-D-manno-heptose biosynthesis; ADP-L-glycero-beta-D-manno-heptose from D-glycero-beta-D-manno-heptose 7-phosphate: step 4/4. Its function is as follows. Catalyzes the interconversion between ADP-D-glycero-beta-D-manno-heptose and ADP-L-glycero-beta-D-manno-heptose via an epimerization at carbon 6 of the heptose. In Cupriavidus metallidurans (strain ATCC 43123 / DSM 2839 / NBRC 102507 / CH34) (Ralstonia metallidurans), this protein is ADP-L-glycero-D-manno-heptose-6-epimerase.